We begin with the raw amino-acid sequence, 463 residues long: Probable ECA polymerase (463 aa).

Helical transmembrane passes span 6 to 26, 39 to 59, 65 to 85, 112 to 132, 154 to 174, 180 to 200, 201 to 221, 222 to 242, 340 to 360, 377 to 397, and 408 to 428; these read FGGL…LTWM, FSLL…VLVF, VVPV…YAIY, ANLT…IFFL, GVAL…VYFL, AWLM…VIVG, GTRA…IVRG, WITL…MFWL, LVVM…GLVI, YKAA…IVLT, and VVFF…LYWL.

This sequence belongs to the WzyE family. In terms of assembly, probably part of a complex composed of WzxE, WzyE and WzzE.

It is found in the cell inner membrane. The protein operates within bacterial outer membrane biogenesis; enterobacterial common antigen biosynthesis. In terms of biological role, probably involved in the polymerization of enterobacterial common antigen (ECA) trisaccharide repeat units. This chain is Probable ECA polymerase, found in Pectobacterium carotovorum subsp. carotovorum (strain PC1).